Reading from the N-terminus, the 274-residue chain is 2,3,4,5-tetrahydropyridine-2,6-dicarboxylate N-succinyltransferase (274 aa).

Positions 106 and 143 each coordinate substrate.

This sequence belongs to the transferase hexapeptide repeat family. As to quaternary structure, homotrimer.

It localises to the cytoplasm. It carries out the reaction (S)-2,3,4,5-tetrahydrodipicolinate + succinyl-CoA + H2O = (S)-2-succinylamino-6-oxoheptanedioate + CoA. It participates in amino-acid biosynthesis; L-lysine biosynthesis via DAP pathway; LL-2,6-diaminopimelate from (S)-tetrahydrodipicolinate (succinylase route): step 1/3. The chain is 2,3,4,5-tetrahydropyridine-2,6-dicarboxylate N-succinyltransferase from Rickettsia felis (strain ATCC VR-1525 / URRWXCal2) (Rickettsia azadi).